A 163-amino-acid polypeptide reads, in one-letter code: Interleukin-31 (163 aa).

An N-terminal signal peptide occupies residues 1–23 (MIFHTGTTKPTLVLLCCIGTWLA). 3 N-linked (GlcNAc...) asparagine glycosylation sites follow: Asn-55, Asn-84, and Asn-124.

It localises to the secreted. Its function is as follows. Activates STAT3 and possibly STAT1 and STAT5 through the IL31 heterodimeric receptor composed of IL31RA and OSMR. May function in skin immunity. Enhances myeloid progenitor cell survival in vitro. Induces RETNLA and serum amyloid A protein expression in macrophages. The polypeptide is Interleukin-31 (Il31) (Mus musculus (Mouse)).